A 472-amino-acid polypeptide reads, in one-letter code: Sulfate adenylyltransferase subunit 1 (472 aa).

Residues 24 to 240 form the tr-type G domain; the sequence is KSLLRFLTCG…ENAEVGTRDL (217 aa). The segment at 33–40 is G1; that stretch reads GSVDDGKS. Residue 33 to 40 participates in GTP binding; it reads GSVDDGKS. Residues 91–95 form a G2 region; the sequence is GITID. The tract at residues 112-115 is G3; it reads DTPG. Residues 112–116 and 167–170 contribute to the GTP site; these read DTPGH and NKMD. Positions 167-170 are G4; that stretch reads NKMD. The segment at 204-206 is G5; sequence SAL.

This sequence belongs to the TRAFAC class translation factor GTPase superfamily. Classic translation factor GTPase family. CysN/NodQ subfamily. As to quaternary structure, heterodimer composed of CysD, the smaller subunit, and CysN.

The enzyme catalyses sulfate + ATP + H(+) = adenosine 5'-phosphosulfate + diphosphate. The protein operates within sulfur metabolism; hydrogen sulfide biosynthesis; sulfite from sulfate: step 1/3. In terms of biological role, with CysD forms the ATP sulfurylase (ATPS) that catalyzes the adenylation of sulfate producing adenosine 5'-phosphosulfate (APS) and diphosphate, the first enzymatic step in sulfur assimilation pathway. APS synthesis involves the formation of a high-energy phosphoric-sulfuric acid anhydride bond driven by GTP hydrolysis by CysN coupled to ATP hydrolysis by CysD. This is Sulfate adenylyltransferase subunit 1 from Tolumonas auensis (strain DSM 9187 / NBRC 110442 / TA 4).